Reading from the N-terminus, the 291-residue chain is Lactoylglutathione lyase (291 aa).

VOC domains are found at residues 24-149 and 155-283; these read RLLH…LIQR and PLCQ…LVDN. The substrate site is built by Arg-31, Asn-82, and His-96. The active site involves His-96. Glu-145 functions as the Proton donor/acceptor in the catalytic mechanism. Glu-145 lines the Ni(2+) pocket. Active-site residues include Gln-158 and Glu-209. Position 209 (Glu-209) interacts with Ni(2+).

The protein belongs to the glyoxalase I family. In terms of assembly, monomer. The cofactor is Ni(2+). Post-translationally, phosphorylated after gibberellin treatment. In terms of tissue distribution, expressed in callus, stem, leaves, panicles and maturing seeds (at protein level).

It carries out the reaction (R)-S-lactoylglutathione = methylglyoxal + glutathione. It participates in secondary metabolite metabolism; methylglyoxal degradation; (R)-lactate from methylglyoxal: step 1/2. Its function is as follows. Catalyzes the conversion of hemimercaptal, formed from methylglyoxal and glutathione, to S-lactoylglutathione. Involved in the detoxifiation of methylglyoxal. Can functionally complement growth defect of a yeast mutant lacking GLY I. Involved in abiotic stress response. Over-expression of GLYI-11 in tobacco increases tolerance to osmotic, oxidative and salt stresses. This chain is Lactoylglutathione lyase, found in Oryza sativa subsp. japonica (Rice).